The chain runs to 280 residues: Pantothenate synthetase (280 aa).

30-37 (MGYLHEGH) provides a ligand contact to ATP. His37 acts as the Proton donor in catalysis. Gln61 provides a ligand contact to (R)-pantoate. A beta-alanine-binding site is contributed by Gln61. 147–150 (GQKD) is a binding site for ATP. Gln153 serves as a coordination point for (R)-pantoate. ATP-binding positions include Val176 and 184 to 187 (MSSR).

The protein belongs to the pantothenate synthetase family. Homodimer.

Its subcellular location is the cytoplasm. The enzyme catalyses (R)-pantoate + beta-alanine + ATP = (R)-pantothenate + AMP + diphosphate + H(+). The protein operates within cofactor biosynthesis; (R)-pantothenate biosynthesis; (R)-pantothenate from (R)-pantoate and beta-alanine: step 1/1. In terms of biological role, catalyzes the condensation of pantoate with beta-alanine in an ATP-dependent reaction via a pantoyl-adenylate intermediate. The protein is Pantothenate synthetase of Fervidobacterium nodosum (strain ATCC 35602 / DSM 5306 / Rt17-B1).